The primary structure comprises 295 residues: Ribosomal protein L11 methyltransferase (295 aa).

The S-adenosyl-L-methionine site is built by Thr-150, Gly-171, Asp-193, and Asn-232.

It belongs to the methyltransferase superfamily. PrmA family.

The protein resides in the cytoplasm. It carries out the reaction L-lysyl-[protein] + 3 S-adenosyl-L-methionine = N(6),N(6),N(6)-trimethyl-L-lysyl-[protein] + 3 S-adenosyl-L-homocysteine + 3 H(+). Methylates ribosomal protein L11. This is Ribosomal protein L11 methyltransferase from Neisseria gonorrhoeae (strain ATCC 700825 / FA 1090).